A 264-amino-acid polypeptide reads, in one-letter code: MTKTWPPRTVIRKSGGLRGMRTLESALHRGGLGPVAGVDEVGRGACAGPLVVAACVLGPGRIASLAALDDSKKLSEQAREKLFPLICRYAVAYHVVFIPSAEVDRHGVHVANIEGMRRAVAGLAVRPGYVLSDGFRVPGLPMPSLPVIGGDAAAACIAAASVLAKVSRDRVMVALDADHPGYGFAEHKGYSTPAHSRALARLGPCPQHRYSFINVRRVASGSNTAEVADGQPDPRDGTAQTGEGRWSKSSHPATMRATGRAQGT.

The RNase H type-2 domain occupies Gly33–Thr224. A divalent metal cation contacts are provided by Asp39, Glu40, and Asp133. The segment at Ser222–Thr264 is disordered.

The protein belongs to the RNase HII family. The cofactor is Mn(2+). Mg(2+) is required as a cofactor.

It is found in the cytoplasm. It carries out the reaction Endonucleolytic cleavage to 5'-phosphomonoester.. Its function is as follows. Endonuclease that specifically degrades the RNA of RNA-DNA hybrids. This Mycobacterium bovis (strain ATCC BAA-935 / AF2122/97) protein is Ribonuclease HII.